Here is a 486-residue protein sequence, read N- to C-terminus: Homoserine O-acetyltransferase (486 aa).

Residues 66–436 (NVLVICHALT…PEGHDAFLLE (371 aa)) form the AB hydrolase-1 domain. S162 acts as the Nucleophile in catalysis. Residues 248–281 (KFSRRSPSIAQQQKAQREETRKPSTVSEHSLQIH) are disordered. 2 stretches are compositionally biased toward polar residues: residues 250-261 (SRRSPSIAQQQK) and 270-280 (PSTVSEHSLQI). Active-site residues include D401 and H430.

Belongs to the AB hydrolase superfamily. MetX family.

The protein localises to the cytoplasm. The catalysed reaction is L-homoserine + acetyl-CoA = O-acetyl-L-homoserine + CoA. Its pathway is amino-acid biosynthesis; L-methionine biosynthesis via de novo pathway; O-acetyl-L-homoserine from L-homoserine: step 1/1. Commits homoserine to the methionine biosynthesis pathway by catalyzing its O-acetylation. The chain is Homoserine O-acetyltransferase (MET2) from Saccharomyces cerevisiae (strain ATCC 204508 / S288c) (Baker's yeast).